Consider the following 419-residue polypeptide: Creatine kinase S-type, mitochondrial (419 aa).

A mitochondrion-targeting transit peptide spans 1 to 39 (MASAFSKLLTGRNASLLFTTLGTSALTTGYLLNRQKVSA). Residues 40 to 64 (DAREQHKLFPPSADYPDLRKHNNCM) form a cardiolipin-binding region. The region spanning 46–132 (KLFPPSADYP…FDPVIKLRHN (87 aa)) is the Phosphagen kinase N-terminal domain. The Phosphagen kinase C-terminal domain maps to 159-401 (YVLSSRVRTG…NYLVDCEKKL (243 aa)). Residues 162 to 166 (SSRVR) and His225 contribute to the ATP site. Tyr255 bears the Phosphotyrosine mark. ATP is bound by residues Arg270, Arg326, 354–359 (RGTGGV), and Asp369. Position 356 is a phosphothreonine (Thr356).

The protein belongs to the ATP:guanido phosphotransferase family. As to quaternary structure, exists as an octamer composed of four CKMT2 homodimers.

The protein resides in the mitochondrion inner membrane. The catalysed reaction is creatine + ATP = N-phosphocreatine + ADP + H(+). Functionally, reversibly catalyzes the transfer of phosphate between ATP and various phosphogens (e.g. creatine phosphate). Creatine kinase isoenzymes play a central role in energy transduction in tissues with large, fluctuating energy demands, such as skeletal muscle, heart, brain and spermatozoa. This is Creatine kinase S-type, mitochondrial (Ckmt2) from Mus musculus (Mouse).